The following is a 566-amino-acid chain: E3 ubiquitin-protein ligase Rnf220 (566 aa).

Residue Lys277 forms a Glycyl lysine isopeptide (Lys-Gly) (interchain with G-Cter in SUMO2) linkage. A disordered region spans residues 277–300; that stretch reads KREGDSPTASPHSSATEDLHHSDR. Residues 291-300 are compositionally biased toward basic and acidic residues; sequence ATEDLHHSDR. Ser390 bears the Phosphoserine mark. Residues 485-513 adopt a coiled-coil conformation; sequence EESAVTTFEALKARVRELERQLSRGDRYK. The segment at 514-522 is required for targeting to the cytoplasm; the sequence is CLICMDSYS. The RING-type zinc finger occupies 514 to 553; the sequence is CLICMDSYSMPLTSIQCWHVHCEECWLRTLGAKKLCPQCN.

In terms of assembly, interacts with SIN3B. Interacts with CTNNB1 (via Armadillo repeats 2-8). Interacts with USP7 (via MATH domain). Auto-ubiquitinated; leads to proteasomal degradation. As to expression, in the brain, expressed in the hippocampus, telenecephalon and cerebellum. No expression in astro glial cells or in neural progenitor cells.

The protein resides in the cytoplasm. It localises to the nucleus. The enzyme catalyses S-ubiquitinyl-[E2 ubiquitin-conjugating enzyme]-L-cysteine + [acceptor protein]-L-lysine = [E2 ubiquitin-conjugating enzyme]-L-cysteine + N(6)-ubiquitinyl-[acceptor protein]-L-lysine.. It participates in protein modification; protein ubiquitination. E3 ubiquitin-protein ligase that promotes the ubiquitination and proteasomal degradation of SIN3B. Independently of its E3 ligase activity, acts as a CTNNB1 stabilizer through USP7-mediated deubiquitination of CTNNB1 and promotes Wnt signaling. Plays a critical role in the regulation of nuclear lamina. This chain is E3 ubiquitin-protein ligase Rnf220 (Rnf220), found in Mus musculus (Mouse).